Here is a 65-residue protein sequence, read N- to C-terminus: MPKLKTKSGAAKRFKKTGKGGFKHRCANRAHINTKMTTKRKRHLRGMNQVAKVDTASLVQQMPYA.

Residues 1–22 (MPKLKTKSGAAKRFKKTGKGGF) form a disordered region.

The protein belongs to the bacterial ribosomal protein bL35 family.

The chain is Large ribosomal subunit protein bL35 from Francisella philomiragia subsp. philomiragia (strain ATCC 25017 / CCUG 19701 / FSC 153 / O#319-036).